Here is a 429-residue protein sequence, read N- to C-terminus: Asparagine--tRNA ligase (429 aa).

This sequence belongs to the class-II aminoacyl-tRNA synthetase family.

The protein resides in the cytoplasm. The enzyme catalyses tRNA(Asn) + L-asparagine + ATP = L-asparaginyl-tRNA(Asn) + AMP + diphosphate + H(+). The chain is Asparagine--tRNA ligase from Thermoplasma acidophilum (strain ATCC 25905 / DSM 1728 / JCM 9062 / NBRC 15155 / AMRC-C165).